Consider the following 992-residue polypeptide: Tubulin glycylase 3A (992 aa).

Disordered stretches follow at residues 1-54 and 68-113; these read MQTR…NRVV and QSDS…LGAP. Positions 7 to 26 are enriched in basic and acidic residues; the sequence is SEPHRSRDQVTDGDRNRDQP. Positions 39 to 49 are enriched in pro residues; the sequence is VTPPAAPPPTP. A TTL domain is found at 295-645; the sequence is FKLTACVAFL…RRTDPKAELG (351 aa). ATP is bound by residues 457–460, Lys470, and Asp472; that span reads QKYI. Disordered stretches follow at residues 746 to 766 and 791 to 828; these read SLCS…TATP and KRNT…PVES. The span at 794–807 shows a compositional bias: polar residues; that stretch reads TGGSLSGEQVQSTA.

Its subcellular location is the cytoplasm. The protein localises to the cytoskeleton. Polylycylase which modifies alpha- and beta-tubulin, generating side chains of glycine on the gamma-carboxyl groups of specific glutamate residues within the C-terminal tail of alpha- and beta-tubulin. Involved both in the side-chain initiation and elongation steps of the polyglycylation reaction by adding a single glycine chain to generate monoglycine side chains and by elongating monoglycine side chains to polyglycine side chains. This is Tubulin glycylase 3A (TTLL3A) from Drosophila melanogaster (Fruit fly).